Reading from the N-terminus, the 360-residue chain is MLVWLAEYLVQYNTAFNVVSYITFRAIMALLTAMGIGLWIGPEVIRRLQLLKFGQEVRNDGPESHFKKRGTPTMGGIMILIAIGVSTLLWADLRNSYVWFVLFVLFGYGAVGFVDDYWKIKRKNTDGLIARWKYFWLSVIALIAVFGIYAVGKDTAATQLVVPFFKEFMPQLGIFFIILSYFVIVGTSNAVNLTDGLDGLAIVPTIMVASAFALIAWATGNFNFAQYLHIPFVPNAGELVILCTAIVGAGLGFLWYNTYPAQVFMGDVGSLSLGGALGTIAVLVRQELLLVIMGGVFVVEALSVILQVGSYKLRQKRIFRMAPIHHHFELKGWPEPRVIVCFWIITLMLVLIGLVTLKLR.

Transmembrane regions (helical) follow at residues 21 to 41 (YITF…LWIG), 73 to 93 (TMGG…WADL), 98 to 118 (VWFV…DDYW), 132 to 152 (WKYF…YAVG), 168 to 188 (FMPQ…VGTS), 199 to 219 (GLAI…AWAT), 236 to 256 (AGEL…FLWY), 263 to 283 (VFMG…IAVL), 288 to 308 (LLLV…ILQV), and 338 to 358 (VIVC…VTLK).

It belongs to the glycosyltransferase 4 family. MraY subfamily. The cofactor is Mg(2+).

It is found in the cell inner membrane. It catalyses the reaction UDP-N-acetyl-alpha-D-muramoyl-L-alanyl-gamma-D-glutamyl-meso-2,6-diaminopimeloyl-D-alanyl-D-alanine + di-trans,octa-cis-undecaprenyl phosphate = di-trans,octa-cis-undecaprenyl diphospho-N-acetyl-alpha-D-muramoyl-L-alanyl-D-glutamyl-meso-2,6-diaminopimeloyl-D-alanyl-D-alanine + UMP. Its pathway is cell wall biogenesis; peptidoglycan biosynthesis. Functionally, catalyzes the initial step of the lipid cycle reactions in the biosynthesis of the cell wall peptidoglycan: transfers peptidoglycan precursor phospho-MurNAc-pentapeptide from UDP-MurNAc-pentapeptide onto the lipid carrier undecaprenyl phosphate, yielding undecaprenyl-pyrophosphoryl-MurNAc-pentapeptide, known as lipid I. The sequence is that of Phospho-N-acetylmuramoyl-pentapeptide-transferase from Actinobacillus pleuropneumoniae serotype 7 (strain AP76).